The primary structure comprises 331 residues: Holliday junction branch migration complex subunit RuvB (331 aa).

Residues 1 to 182 (MSNDTLHKYE…FGIPLHLEFY (182 aa)) are large ATPase domain (RuvB-L). ATP is bound by residues Leu21, Arg22, Gly63, Lys66, Thr67, Thr68, 129–131 (EDY), Arg172, Tyr182, and Arg219. Residue Thr67 participates in Mg(2+) binding. Positions 183–254 (SVDELVLVIK…FANSALFRLG (72 aa)) are small ATPAse domain (RuvB-S). Residues 257–331 (GAGFDKMDLK…FEYLLSSKYI (75 aa)) form a head domain (RuvB-H) region. DNA contacts are provided by Arg310 and Arg315.

This sequence belongs to the RuvB family. As to quaternary structure, homohexamer. Forms an RuvA(8)-RuvB(12)-Holliday junction (HJ) complex. HJ DNA is sandwiched between 2 RuvA tetramers; dsDNA enters through RuvA and exits via RuvB. An RuvB hexamer assembles on each DNA strand where it exits the tetramer. Each RuvB hexamer is contacted by two RuvA subunits (via domain III) on 2 adjacent RuvB subunits; this complex drives branch migration. In the full resolvosome a probable DNA-RuvA(4)-RuvB(12)-RuvC(2) complex forms which resolves the HJ.

The protein localises to the cytoplasm. It catalyses the reaction ATP + H2O = ADP + phosphate + H(+). Functionally, the RuvA-RuvB-RuvC complex processes Holliday junction (HJ) DNA during genetic recombination and DNA repair, while the RuvA-RuvB complex plays an important role in the rescue of blocked DNA replication forks via replication fork reversal (RFR). RuvA specifically binds to HJ cruciform DNA, conferring on it an open structure. The RuvB hexamer acts as an ATP-dependent pump, pulling dsDNA into and through the RuvAB complex. RuvB forms 2 homohexamers on either side of HJ DNA bound by 1 or 2 RuvA tetramers; 4 subunits per hexamer contact DNA at a time. Coordinated motions by a converter formed by DNA-disengaged RuvB subunits stimulates ATP hydrolysis and nucleotide exchange. Immobilization of the converter enables RuvB to convert the ATP-contained energy into a lever motion, pulling 2 nucleotides of DNA out of the RuvA tetramer per ATP hydrolyzed, thus driving DNA branch migration. The RuvB motors rotate together with the DNA substrate, which together with the progressing nucleotide cycle form the mechanistic basis for DNA recombination by continuous HJ branch migration. Branch migration allows RuvC to scan DNA until it finds its consensus sequence, where it cleaves and resolves cruciform DNA. The protein is Holliday junction branch migration complex subunit RuvB of Anaplasma marginale (strain Florida).